Here is a 320-residue protein sequence, read N- to C-terminus: Protoheme IX farnesyltransferase 1 (320 aa).

9 consecutive transmembrane segments (helical) span residues 34–54 (GIII…FASA), 58–78 (LTGL…AFVM), 112–132 (AMIL…LYSL), 135–155 (LTAF…TVWV), 160–180 (VWST…GYCA), 189–209 (AVLL…AIGI), 234–254 (IKMM…PFSL), 255–275 (GTGH…GIWI), and 299–319 (LIYF…MFLI).

Belongs to the UbiA prenyltransferase family. Protoheme IX farnesyltransferase subfamily. In terms of assembly, interacts with CtaA.

The protein resides in the cell membrane. The catalysed reaction is heme b + (2E,6E)-farnesyl diphosphate + H2O = Fe(II)-heme o + diphosphate. The protein operates within porphyrin-containing compound metabolism; heme O biosynthesis; heme O from protoheme: step 1/1. Converts heme B (protoheme IX) to heme O by substitution of the vinyl group on carbon 2 of heme B porphyrin ring with a hydroxyethyl farnesyl side group. This Bacillus subtilis (strain 168) protein is Protoheme IX farnesyltransferase 1 (ctaB1).